We begin with the raw amino-acid sequence, 232 residues long: UPF0758 protein Amet_2289 (232 aa).

Positions 110-232 constitute an MPN domain; it reads RIKSPDDVSN…YYSLKEKSMM (123 aa). His-181, His-183, and Asp-194 together coordinate Zn(2+). The JAMM motif motif lies at 181–194; it reads HNHPSGDPSPSGED.

The protein belongs to the UPF0758 family.

The polypeptide is UPF0758 protein Amet_2289 (Alkaliphilus metalliredigens (strain QYMF)).